We begin with the raw amino-acid sequence, 462 residues long: Nitrate/nitrite transporter NarU (462 aa).

Topologically, residues 1–35 (MTRQNENYNRYLLSDWRPENPAFWENKGKGIARRN) are cytoplasmic. The helical transmembrane segment at 36-56 (LWISVSCLLLAFCVWMLFSAV) threads the bilayer. Topologically, residues 57-71 (AVNLNKIGFNFTTDQ) are periplasmic. A helical membrane pass occupies residues 72–92 (LFLLTALPSLSGAILRVPYSF). Over 93-101 (MVPLFGGRK) the chain is Cytoplasmic. The chain crosses the membrane as a helical span at residues 102–122 (WTVLSTVILIIPCAWLGFAVQ). The Periplasmic segment spans residues 123 to 124 (NP). A helical membrane pass occupies residues 125-145 (ATPFGVFMLIALLCGFAGANF). Residues 146 to 180 (ASSMGNISFFFPKARQGSALGINGGLGNLGVSVMQ) are Cytoplasmic-facing. Residues 181–201 (LIAPLVIFLPIFTFLGVQGVP) traverse the membrane as a helical segment. The Periplasmic portion of the chain corresponds to 202–206 (QPDGS). Residues 207–227 (LLALTNAAWIWVPLLAVATLA) form a helical membrane-spanning segment. Residues 228-258 (AWFGMNDIGSSKASVASQLPVLKRLHLWLLS) are Cytoplasmic-facing. The helical transmembrane segment at 259–279 (LLYLATFGSFIGFSAGFAMLA) threads the bilayer. Topologically, residues 280–287 (KTQFPDVN) are periplasmic. Residues 288–308 (ILQLAFFGPFIGALARSAGGV) form a helical membrane-spanning segment. Residues 309–317 (ISDKFGGVR) lie on the Cytoplasmic side of the membrane. Residues 318-338 (VTLINFIFMALFTALLFLTLP) traverse the membrane as a helical segment. The Periplasmic portion of the chain corresponds to 339-341 (GSG). A helical membrane pass occupies residues 342–362 (AGSFSAFYLVFMGLFLTAGLG). The Cytoplasmic portion of the chain corresponds to 363–401 (SGSTFQMIAVIFRQITLYNVKLRGGSDEQAQREAVTDTA). Residues 402 to 422 (AALGFISAIGAVGGFFIPKAF) form a helical membrane-spanning segment. The Periplasmic segment spans residues 423–432 (GTSLALTGSP). Residues 433 to 453 (VGAMKIFLLFYLACVLLTWLV) traverse the membrane as a helical segment. Residues 454-462 (YGRRKPKQQ) lie on the Cytoplasmic side of the membrane.

The protein belongs to the major facilitator superfamily. Nitrate/nitrite porter (TC 2.A.1.8) family.

It is found in the cell inner membrane. Catalyzes nitrate uptake, nitrite uptake and nitrite export across the cytoplasmic membrane. The chain is Nitrate/nitrite transporter NarU (narU) from Salmonella typhimurium (strain LT2 / SGSC1412 / ATCC 700720).